We begin with the raw amino-acid sequence, 308 residues long: Nodulation protein D 1 (308 aa).

The 58-residue stretch at 6–63 folds into the HTH lysR-type domain; it reads LDLNLLVALDALMTERKLTAAARRINLSQPAMSAAIARLRTYFGDELFSMQGRELIPT. Positions 23–42 form a DNA-binding region, H-T-H motif; the sequence is LTAAARRINLSQPAMSAAIA.

The protein belongs to the LysR transcriptional regulatory family.

Its function is as follows. NodD regulates the expression of the nodABCFE genes which encode other nodulation proteins. NodD is also a negative regulator of its own expression. Binds flavonoids as inducers. This is Nodulation protein D 1 (nodD1) from Rhizobium meliloti (strain 1021) (Ensifer meliloti).